A 1483-amino-acid polypeptide reads, in one-letter code: MSNSNRKEITGLNRMTPKGLKELCKKDKLYQTPRLNDVLYLHYQGFQCIESLEEYTELKCLWLECNAISEIQGLEKLSKLKCLFLQNNLITKIENLDPCRELDTLNLSSNHIRKIQNIGTNVLPVLNTLTISSNYLKDSESLSDLIQCKTLSVLDLSNNRIDDILIVKIFEQMLNLKVLVLQGNPVVSRLPQYRKTLILACKELTYLDSRPVFPRDRACAEAWKRDGYEGERKENNRWNRAERRKTRESINCTIRMRNSHRPPDQQDPLLRSSDSEDDTCAETARKKVALENGCVDDLWEEVSGEQPISEDGTNSSSSLEDNDGTSSQDDLIAEKLSNRRTLEGRPTVLYETEVSNVKSANNDINIFEEGVGKASQIIIEDKPVTKIKLINEPSCMNDKSAMNCTSMGPVVKENDFDEDAEIKNVDDMVPCQNLIKSNEDINSEFGFSSKLKQDFDQTCTALRNDAECKEFDEELTIKESESKPFNEMYDIFAAEDDKLNETLDLNLNETTCPHHVHDNFFSEQNKMPSFYEEDIMINLLPKTKEKTLLEKDSIIENEKCAHDLDEMGRQMEEDLAELRQSTQNLIGISIDETARTDSETDEEDLIAQQDPYSPLLKQQFKDRRMKIMLTEETKAQEESLSDRNIALSNESDQDDKQDQLFAKILDDATENIPKRIFGTGCDALSSVWPQEECLLQLTLPENKESPAQEDTFKKSITNSTSFEKANEICVRMDQKMAEEEEALGKLLHDLEGEINNVYDINTKVKYEENTSTNESDAVSICTSLLDDIIVGLTFDEVLCHEKPKSFEFGLIESDEEFSYSFEPKLEKLVPPALEDPARGKSLRECLDTFSDFVSSMADPKLPVMLGRNPTSGVEKIRAAQELLKTKNLSDLYKDTAESLNSQVAKEIEKRKRRVAASATRCFNQRDKYDDTLELVENRLMIVKKDSGDLEELPPPPPLISDTESEDDNPTEDNYTPGNEVHRHGTKTQDSKEHLMSNLLNQNQDDIIEGKKNDSAEDEFYSLEAMTTFGNLDAEFFQKLDLQKVNASEDSEPAINCMRSYNELQAYMKSGSLNTQLNSEEAEMLQTMCSRVASDVDKPKSQNSKEEEEDDLLKKMVLRMKEYEEREHQLQLISHETSSELGPIKLSIGGSKLFEQNTKIPESVLVHSENEPTRNNKPINTKNTNDKESSDIMEKNGDPSVTTSFKTSHKSIDDDIQSDVSTDYESGEEVVVVEPPTLSEAVLKSFYSDEFEADSKMVHELEEATRRNLRRYNPNIMHISTSNHPFSTNNILPTKTSTSELSEGAKAKWAKIAERLHEFLDPETIANLNKEQFGESDECEDSQDDNITDITVEETNLKKDTKLVVLEEYNNTHTCDGNSCPSKLDDSDQFASLKGFEKIKETPTHNMGLSSVMSASQNKTSETLPNEIGNKITDFSSFKTSSTDLINSEGVKTEQIQCNLQILSDEGDVVVEELSVNAQVSSFK.

LRR repeat units lie at residues 34–56 (RLNDVLYLHYQGFQCIESLEEYT), 57–78 (ELKCLWLECNAISEIQGLEKLS), 79–100 (KLKCLFLQNNLITKIENLDPCR), 101–122 (ELDTLNLSSNHIRKIQNIGTNV), 125–146 (VLNTLTISSNYLKDSESLSDLI), and 150–171 (TLSVLDLSNNRIDDILIVKIFE). Residues 185 to 223 (PVVSRLPQYRKTLILACKELTYLDSRPVFPRDRACAEAW) enclose the LRRCT domain. 4 disordered regions span residues 249–282 (SINCTIRMRNSHRPPDQQDPLLRSSDSEDDTCAE), 300–327 (EEVSGEQPISEDGTNSSSSLEDNDGTSS), 945–986 (DSGD…HGTK), and 1167–1213 (SENE…SIDD). Residues 311–327 (DGTNSSSSLEDNDGTSS) are compositionally biased toward polar residues. Residues 1183–1196 (TNDKESSDIMEKNG) show a composition bias toward basic and acidic residues.

The protein belongs to the DNAAF1 family.

The protein localises to the cell projection. It localises to the cilium. Functionally, cilium-specific protein required for cilia structures. The protein is Dynein axonemal assembly factor 1 homolog (dtr) of Drosophila melanogaster (Fruit fly).